We begin with the raw amino-acid sequence, 261 residues long: Caveolae-associated protein 3 (261 aa).

The segment at 1-84 is interaction with CAVIN1; it reads MRESALERGP…SNTLAQLLAK (84 aa). Residues 20-78 form a leucine-zipper region; the sequence is VHAVTVVTLLEKLASMLETLRERQGGLARRQGGLAGSVRRIQSGLGALSRSHDTTSNTL. 2 positions are modified to phosphoserine: Ser-62 and Ser-70. A Glycyl lysine isopeptide (Lys-Gly) (interchain with G-Cter in SUMO2) cross-link involves residue Lys-128. The tract at residues 135–203 is interaction with CAV1; the sequence is ASAFQKAPEP…SGRKGPAAPP (69 aa). The disordered stretch occupies residues 139 to 261; that stretch reads QKAPEPLGPA…EALLQMESVA (123 aa). Positions 158-170 are enriched in acidic residues; it reads LEAEVGESSDEEP. Phosphoserine is present on residues Ser-165, Ser-166, and Ser-173. Pro residues predominate over residues 200–212; that stretch reads AAPPPTPVKPPRL. Residues 213–231 show a composition bias toward low complexity; the sequence is GPGRSAEAQPEAQPALEPT.

The protein belongs to the CAVIN family. In terms of assembly, component of the CAVIN complex composed of CAVIN1, CAVIN2, CAVIN3 and CAVIN4. Interacts with PRKCD and with phosphatidylserine. Phosphatidylserine may form a bridge between PKC and PKC-binding partners and stabilize the binding. Interacts with PER2. Interacts with CAVIN1. Interacts (via leucine-zipper domain) with CAV1 in a cholesterol-sensitive manner. Interacts with EPS15L1. In vitro, phosphorylated by PRKCD. In terms of tissue distribution, skeletal muscle, liver, stomach, lung, kidney and heart (at protein level). Strongly expressed in mammary and epithelial cells.

Its subcellular location is the cytoplasm. The protein localises to the membrane. It localises to the caveola. The protein resides in the cytosol. Regulates the traffic and/or budding of caveolae. Plays a role in caveola formation in a tissue-specific manner. Required for the formation of caveolae in smooth muscle but not in the lung and heart endothelial cells. Regulates the equilibrium between cell surface-associated and cell surface-dissociated caveolae by promoting the rapid release of caveolae from the cell surface. Plays a role in the regulation of the circadian clock. Modulates the period length and phase of circadian gene expression and also regulates expression and interaction of the core clock components PER1/2 and CRY1/2. This Homo sapiens (Human) protein is Caveolae-associated protein 3.